An 87-amino-acid chain; its full sequence is Small ribosomal subunit protein uS17 (87 aa).

It belongs to the universal ribosomal protein uS17 family. In terms of assembly, part of the 30S ribosomal subunit.

In terms of biological role, one of the primary rRNA binding proteins, it binds specifically to the 5'-end of 16S ribosomal RNA. The chain is Small ribosomal subunit protein uS17 from Aster yellows witches'-broom phytoplasma (strain AYWB).